The chain runs to 217 residues: 3,4-dihydroxy-2-butanone 4-phosphate synthase (217 aa).

Residues 37–38, Asp-42, 150–154, and Glu-174 contribute to the D-ribulose 5-phosphate site; these read RE and RGGHT. Glu-38 serves as a coordination point for Mg(2+). His-153 contacts Mg(2+).

It belongs to the DHBP synthase family. As to quaternary structure, homodimer. It depends on Mg(2+) as a cofactor. Requires Mn(2+) as cofactor.

It catalyses the reaction D-ribulose 5-phosphate = (2S)-2-hydroxy-3-oxobutyl phosphate + formate + H(+). It participates in cofactor biosynthesis; riboflavin biosynthesis; 2-hydroxy-3-oxobutyl phosphate from D-ribulose 5-phosphate: step 1/1. Catalyzes the conversion of D-ribulose 5-phosphate to formate and 3,4-dihydroxy-2-butanone 4-phosphate. The protein is 3,4-dihydroxy-2-butanone 4-phosphate synthase of Sodalis glossinidius (strain morsitans).